An 812-amino-acid polypeptide reads, in one-letter code: Probable phosphoketolase (812 aa).

It belongs to the XFP family. Thiamine diphosphate serves as cofactor.

The protein is Probable phosphoketolase of Thermosynechococcus vestitus (strain NIES-2133 / IAM M-273 / BP-1).